Here is a 693-residue protein sequence, read N- to C-terminus: Putative transmembrane protein ORF68 (693 aa).

A signal peptide spans 1–17 (MILTIILYTLLFSTCSA). Residues 18-666 (QSVHTMPEAV…WLTKFGTGGG (649 aa)) are Extracellular-facing. Residues 208-256 (SKAANNRMDALEDGMKNINTRVTETNLLLEKLSTEVTGALTQLENEIKM) are a coiled coil. Residues 667-687 (IAGVTIGLLLPILAIVFSCYV) traverse the membrane as a helical segment. The Cytoplasmic portion of the chain corresponds to 688–693 (FCKRRV).

It localises to the host membrane. This is Putative transmembrane protein ORF68 from Magallana gigas (Pacific oyster).